Reading from the N-terminus, the 372-residue chain is Dual-specificity RNA methyltransferase RlmN (372 aa).

The active-site Proton acceptor is Glu92. The 240-residue stretch at 98–337 folds into the Radical SAM core domain; it reads ETDRATLCVS…VILRKTRGDD (240 aa). The cysteines at positions 105 and 342 are disulfide-linked. Cys112, Cys116, and Cys119 together coordinate [4Fe-4S] cluster. S-adenosyl-L-methionine contacts are provided by residues 166–167, Ser198, 220–222, and Asn299; these read GE and SLH. The active-site S-methylcysteine intermediate is Cys342.

The protein belongs to the radical SAM superfamily. RlmN family. [4Fe-4S] cluster is required as a cofactor.

It is found in the cytoplasm. It catalyses the reaction adenosine(2503) in 23S rRNA + 2 reduced [2Fe-2S]-[ferredoxin] + 2 S-adenosyl-L-methionine = 2-methyladenosine(2503) in 23S rRNA + 5'-deoxyadenosine + L-methionine + 2 oxidized [2Fe-2S]-[ferredoxin] + S-adenosyl-L-homocysteine. The catalysed reaction is adenosine(37) in tRNA + 2 reduced [2Fe-2S]-[ferredoxin] + 2 S-adenosyl-L-methionine = 2-methyladenosine(37) in tRNA + 5'-deoxyadenosine + L-methionine + 2 oxidized [2Fe-2S]-[ferredoxin] + S-adenosyl-L-homocysteine. Functionally, specifically methylates position 2 of adenine 2503 in 23S rRNA and position 2 of adenine 37 in tRNAs. m2A2503 modification seems to play a crucial role in the proofreading step occurring at the peptidyl transferase center and thus would serve to optimize ribosomal fidelity. This chain is Dual-specificity RNA methyltransferase RlmN, found in Histophilus somni (strain 129Pt) (Haemophilus somnus).